The following is a 92-amino-acid chain: Cell division protein FtsB (92 aa).

Residues 1–3 (MRF) lie on the Cytoplasmic side of the membrane. Residues 4 to 21 (FQVGLLCLALFVQYRLWF) form a helical membrane-spanning segment. Residues 22–92 (GHNGVQDYTR…TFIRVLPAQQ (71 aa)) are Periplasmic-facing. Positions 40 to 73 (LQTNEKLIKRNKVLTADIEDLKLGHEGIEERARN) form a coiled coil.

Belongs to the FtsB family. As to quaternary structure, part of a complex composed of FtsB, FtsL and FtsQ.

It localises to the cell inner membrane. Essential cell division protein. May link together the upstream cell division proteins, which are predominantly cytoplasmic, with the downstream cell division proteins, which are predominantly periplasmic. The sequence is that of Cell division protein FtsB from Pseudoalteromonas translucida (strain TAC 125).